We begin with the raw amino-acid sequence, 547 residues long: EFKVNGEPVVLHLEKNKGLFSEDYSETHYSPDGRQITTYPPVEDHCYYHGRIENDADSTASISACNGLKGHFKLQGETYLIEPLKLSDSEAHAVYKYENVEKEDEAPKMCGVTETNWEYEEPIKKASKLVVTAEQQKFPYRYVEIVVVVDRRMVTKYNGDLKKIRKWVYELVNIVNNIYRSLNVHVALVGLEIWSKGDKITVQPDSDYTLNSFGEWRERDLLPRKKHDNAQLLTAVVFDGPTIGRAYIAGMCDPRHSVGVVMDHSKENLQVAVTMAHELGHNLGMEHDENQCHCDAPSCVMASVLSVVLSYEFSDCSQNQYQTYLTKHNPQCILNEPLLTVSGNELLEAGEECDCGAPENPCCDAATCKLRPGAQCAEGLCCDQCRFKGAGKICRRARGDNPDDRCTGQSADCPRNRFHRNGQPCLYNHGYCYNGKCPIMFYQCYFLFGSNATVAEDDCFNNNKKGDKYFYCRKENEKYIPCAQEDVKCGRLFCDNKKYPCHYNYSEDLDFGMVDHGTKCADGKVCSNRQCVDVNEAYKSTTVFSLI.

The propeptide occupies 1–133 (EFKVNGEPVV…KKASKLVVTA (133 aa)). A Peptidase M12B domain is found at 141-337 (RYVEIVVVVD…HNPQCILNEP (197 aa)). Ca(2+)-binding residues include Glu144 and Asp228. Disulfide bonds link Cys252-Cys332, Cys292-Cys316, and Cys294-Cys299. His277 lines the Zn(2+) pocket. Residue Glu278 is part of the active site. Zn(2+) contacts are provided by His281 and His287. Residues Cys332, Asn335, Val341, Asn344, Leu346, Glu348, Glu351, and Asp354 each coordinate Ca(2+). A Disintegrin domain is found at 339-421 (LTVSGNELLE…DCPRNRFHRN (83 aa)). Cystine bridges form between Cys353–Cys363, Cys362–Cys385, Cys376–Cys382, Cys381–Cys406, Cys394–Cys413, Cys425–Cys437, Cys444–Cys494, Cys459–Cys501, Cys472–Cys482, Cys489–Cys526, and Cys520–Cys531. Asn451 carries N-linked (GlcNAc...) asparagine glycosylation. Residue Asn504 is glycosylated (N-linked (GlcNAc...) asparagine).

Belongs to the venom metalloproteinase (M12B) family. P-III subfamily. P-IIIa sub-subfamily. In terms of assembly, monomer. Zn(2+) serves as cofactor. As to expression, expressed by the venom gland.

The protein localises to the secreted. Completely inhibited by EDTA, EGTA, 1,10-phenanthroline, and partially by beta-mercaptoethanol. Is not inhibited by aprotinin and leupeptin. This protein is a zinc metalloprotease from snake venom that causes hemorrhage in mice after intradermal injection. It inhibits platelet aggregation induced by collagen and ADP. Has moderate edema activity, but no myotoxic activity. It hydrolyzes the Aalpha-chain and more slowly the Bbeta-chain of fibrinogen, without affecting the gamma-chains. It also shows proteolytic activity on casein. It is unable to clot plasma. It also shows bactericidal activity against E.coli and S.aureus. The protein is Zinc metalloproteinase-disintegrin-like BjussuMP-1 of Bothrops jararacussu (Jararacussu).